Here is a 184-residue protein sequence, read N- to C-terminus: RNA 2',3'-cyclic phosphodiesterase (184 aa).

H40 acts as the Proton donor in catalysis. 2 consecutive short sequence motifs (HXTX) follow at residues H40–L43 and H125–L128. H125 acts as the Proton acceptor in catalysis.

Belongs to the 2H phosphoesterase superfamily. ThpR family.

It catalyses the reaction a 3'-end 2',3'-cyclophospho-ribonucleotide-RNA + H2O = a 3'-end 2'-phospho-ribonucleotide-RNA + H(+). In terms of biological role, hydrolyzes RNA 2',3'-cyclic phosphodiester to an RNA 2'-phosphomonoester. In vitro, ligates 5' and 3' half-tRNA molecules with 2',3'-cyclic phosphate and 5'-hydroxyl termini, respectively, to the product containing the 2'-5' phosphodiester linkage. Ligase activity requires GTP, but GTP hydrolysis is not required for the reaction, which is reversible. Ligase activity is weak compared to the phosphodiesterase activity. The protein is RNA 2',3'-cyclic phosphodiesterase of Pyrococcus furiosus (strain ATCC 43587 / DSM 3638 / JCM 8422 / Vc1).